The primary structure comprises 276 residues: Diaminopimelate epimerase (276 aa).

Residues Asn-13, Gln-46, and Asn-66 each contribute to the substrate site. The active-site Proton donor is Cys-75. Residues 76-77 (GN), Asn-159, Asn-192, and 210-211 (ER) each bind substrate. Residue Cys-219 is the Proton acceptor of the active site. Residue 220–221 (GT) coordinates substrate.

The protein belongs to the diaminopimelate epimerase family. As to quaternary structure, homodimer.

Its subcellular location is the cytoplasm. The catalysed reaction is (2S,6S)-2,6-diaminopimelate = meso-2,6-diaminopimelate. Its pathway is amino-acid biosynthesis; L-lysine biosynthesis via DAP pathway; DL-2,6-diaminopimelate from LL-2,6-diaminopimelate: step 1/1. In terms of biological role, catalyzes the stereoinversion of LL-2,6-diaminopimelate (L,L-DAP) to meso-diaminopimelate (meso-DAP), a precursor of L-lysine and an essential component of the bacterial peptidoglycan. The protein is Diaminopimelate epimerase of Aeromonas salmonicida (strain A449).